The primary structure comprises 498 residues: Probable FAD-binding monooxygenase AlmA (498 aa).

Residues 4–24 traverse the membrane as a helical segment; sequence HIDILIVGAGISGIGIAAHLS. 5 residues coordinate FAD: serine 15, glutamate 36, aspartate 56, phenylalanine 62, and valine 104. 54–56 lines the NADP(+) pocket; sequence RSD. NADP(+) is bound by residues 184–190, 208–209, and 292–293; these read SGATAIT, RS, and RL. Residue valine 395 coordinates FAD.

This sequence belongs to the FAD-binding monooxygenase family. The cofactor is FAD.

The protein resides in the cell membrane. Its pathway is hydrocarbon metabolism; alkane degradation. Functionally, is able to catalyze the degradation of n-alkanes with C chain lengths of 32 and 36. Probably allows Acinetobacter baylyi strain ADP1 to grow on the long-chain n-alkane dotriacontane (C32H66) as a sole carbon source. The polypeptide is Probable FAD-binding monooxygenase AlmA (Acinetobacter baylyi (strain ATCC 33305 / BD413 / ADP1)).